A 248-amino-acid polypeptide reads, in one-letter code: Probable transcriptional regulatory protein Avi_3631 (248 aa).

The protein belongs to the TACO1 family.

The protein localises to the cytoplasm. This is Probable transcriptional regulatory protein Avi_3631 from Allorhizobium ampelinum (strain ATCC BAA-846 / DSM 112012 / S4) (Agrobacterium vitis (strain S4)).